The chain runs to 464 residues: ESX-1 secretion system protein EccE1 (464 aa).

2 helical membrane passes run Phe11–Met31 and Asp34–Ile54.

The protein belongs to the EccE family. As to quaternary structure, part of the ESX-1 / type VII secretion system (T7SS), which is composed of cytosolic and membrane components. The ESX-1 membrane complex is composed of EccB1, EccCa1, EccCb1, EccD1 and EccE1.

It is found in the cell inner membrane. In terms of biological role, part of the ESX-1 / type VII specialized secretion system (T7SS), which exports several proteins including EsxA and EsxB. Plays a role in DNA conjugation, in at least a donor strain. This chain is ESX-1 secretion system protein EccE1, found in Mycolicibacterium smegmatis (strain ATCC 700084 / mc(2)155) (Mycobacterium smegmatis).